Reading from the N-terminus, the 652-residue chain is Acetyl-coenzyme A synthetase (652 aa).

Residues 189–192 and threonine 311 contribute to the CoA site; that span reads RGGK. Residues 387–389, 411–416, aspartate 500, and arginine 515 contribute to the ATP site; these read GEP and DTWWQT. A CoA-binding site is contributed by serine 523. Residue arginine 526 participates in ATP binding. Valine 537, histidine 539, and valine 542 together coordinate Mg(2+). Arginine 584 lines the CoA pocket. Lysine 609 carries the N6-acetyllysine modification.

This sequence belongs to the ATP-dependent AMP-binding enzyme family. Requires Mg(2+) as cofactor. Acetylated. Deacetylation by the SIR2-homolog deacetylase activates the enzyme.

The enzyme catalyses acetate + ATP + CoA = acetyl-CoA + AMP + diphosphate. Catalyzes the conversion of acetate into acetyl-CoA (AcCoA), an essential intermediate at the junction of anabolic and catabolic pathways. AcsA undergoes a two-step reaction. In the first half reaction, AcsA combines acetate with ATP to form acetyl-adenylate (AcAMP) intermediate. In the second half reaction, it can then transfer the acetyl group from AcAMP to the sulfhydryl group of CoA, forming the product AcCoA. This chain is Acetyl-coenzyme A synthetase, found in Bartonella henselae (strain ATCC 49882 / DSM 28221 / CCUG 30454 / Houston 1) (Rochalimaea henselae).